Consider the following 256-residue polypeptide: Small ribosomal subunit protein eS1A (256 aa).

Alanine 2 carries the N-acetylalanine; partial modification.

This sequence belongs to the eukaryotic ribosomal protein eS1 family. Component of the small ribosomal subunit. Mature ribosomes consist of a small (40S) and a large (60S) subunit. The 40S subunit contains about 33 different proteins and 1 molecule of RNA (18S). The 60S subunit contains about 49 different proteins and 3 molecules of RNA (25S, 5.8S and 5S).

It is found in the cytoplasm. The chain is Small ribosomal subunit protein eS1A from Scheffersomyces stipitis (strain ATCC 58785 / CBS 6054 / NBRC 10063 / NRRL Y-11545) (Yeast).